Consider the following 269-residue polypeptide: Putative pyruvate, phosphate dikinase regulatory protein (269 aa).

147–154 provides a ligand contact to ADP; that stretch reads GVSRTSKT.

Belongs to the pyruvate, phosphate/water dikinase regulatory protein family. PDRP subfamily.

It carries out the reaction N(tele)-phospho-L-histidyl/L-threonyl-[pyruvate, phosphate dikinase] + ADP = N(tele)-phospho-L-histidyl/O-phospho-L-threonyl-[pyruvate, phosphate dikinase] + AMP + H(+). The catalysed reaction is N(tele)-phospho-L-histidyl/O-phospho-L-threonyl-[pyruvate, phosphate dikinase] + phosphate + H(+) = N(tele)-phospho-L-histidyl/L-threonyl-[pyruvate, phosphate dikinase] + diphosphate. Bifunctional serine/threonine kinase and phosphorylase involved in the regulation of the pyruvate, phosphate dikinase (PPDK) by catalyzing its phosphorylation/dephosphorylation. This chain is Putative pyruvate, phosphate dikinase regulatory protein, found in Geotalea daltonii (strain DSM 22248 / JCM 15807 / FRC-32) (Geobacter daltonii).